A 251-amino-acid chain; its full sequence is 5'-nucleotidase SurE (251 aa).

Positions 8, 9, 39, and 91 each coordinate a divalent metal cation.

Belongs to the SurE nucleotidase family. The cofactor is a divalent metal cation.

It localises to the cytoplasm. The enzyme catalyses a ribonucleoside 5'-phosphate + H2O = a ribonucleoside + phosphate. Nucleotidase that shows phosphatase activity on nucleoside 5'-monophosphates. This chain is 5'-nucleotidase SurE, found in Methylococcus capsulatus (strain ATCC 33009 / NCIMB 11132 / Bath).